Consider the following 110-residue polypeptide: NADH-quinone oxidoreductase subunit K (110 aa).

Helical transmembrane passes span 14–34 (VSQY…GMMV), 39–59 (ITIL…FVGI), and 70–90 (IFAL…LGII).

The protein belongs to the complex I subunit 4L family. NDH-1 is composed of 14 different subunits. Subunits NuoA, H, J, K, L, M, N constitute the membrane sector of the complex.

The protein localises to the cell inner membrane. The catalysed reaction is a quinone + NADH + 5 H(+)(in) = a quinol + NAD(+) + 4 H(+)(out). Its function is as follows. NDH-1 shuttles electrons from NADH, via FMN and iron-sulfur (Fe-S) centers, to quinones in the respiratory chain. The immediate electron acceptor for the enzyme in this species is believed to be ubiquinone. Couples the redox reaction to proton translocation (for every two electrons transferred, four hydrogen ions are translocated across the cytoplasmic membrane), and thus conserves the redox energy in a proton gradient. This Hydrogenobaculum sp. (strain Y04AAS1) protein is NADH-quinone oxidoreductase subunit K.